The primary structure comprises 447 residues: Tubulin beta-5 chain (447 aa).

GTP is bound by residues Gln11, Glu69, Ser138, Gly142, Thr143, Gly144, Asn204, and Asn226. Glu69 provides a ligand contact to Mg(2+).

It belongs to the tubulin family. As to quaternary structure, dimer of alpha and beta chains. A typical microtubule is a hollow water-filled tube with an outer diameter of 25 nm and an inner diameter of 15 nM. Alpha-beta heterodimers associate head-to-tail to form protofilaments running lengthwise along the microtubule wall with the beta-tubulin subunit facing the microtubule plus end conferring a structural polarity. Microtubules usually have 13 protofilaments but different protofilament numbers can be found in some organisms and specialized cells. Mg(2+) is required as a cofactor.

It is found in the cytoplasm. Its subcellular location is the cytoskeleton. Its function is as follows. Tubulin is the major constituent of microtubules, a cylinder consisting of laterally associated linear protofilaments composed of alpha- and beta-tubulin heterodimers. Microtubules grow by the addition of GTP-tubulin dimers to the microtubule end, where a stabilizing cap forms. Below the cap, tubulin dimers are in GDP-bound state, owing to GTPase activity of alpha-tubulin. This Triticum aestivum (Wheat) protein is Tubulin beta-5 chain (TUBB5).